Here is a 321-residue protein sequence, read N- to C-terminus: Cathepsin O (321 aa).

Positions 1-23 (MDVRALPWLPWLLWLLCRGGGDA) are cleaved as a signal peptide. The propeptide at 24–107 (DSRAPFTPTW…EVHMSIPNVS (84 aa)) is activation peptide. N62 and N105 each carry an N-linked (GlcNAc...) asparagine glycan. Cystine bridges form between C129/C170, C163/C204, and C262/C310. Residue C132 is part of the active site. Active-site residues include H269 and N289.

Belongs to the peptidase C1 family. As to expression, expressed in all tissues examined. High levels seen in the ovary, kidney and placenta while low levels seen in thymus and skeletal muscle.

It is found in the lysosome. The catalysed reaction is The recombinant human enzyme hydrolyzes synthetic endopeptidase substrates including Z-Phe-Arg-NHMec and Z-Arg-Arg-NHMec.. Proteolytic enzyme possibly involved in normal cellular protein degradation and turnover. In Homo sapiens (Human), this protein is Cathepsin O (CTSO).